A 227-amino-acid polypeptide reads, in one-letter code: tRNA (guanine-N(1)-)-methyltransferase (227 aa).

Residues G112 and 131–136 each bind S-adenosyl-L-methionine; that span reads LGDFVL.

This sequence belongs to the RNA methyltransferase TrmD family. Homodimer.

The protein resides in the cytoplasm. The enzyme catalyses guanosine(37) in tRNA + S-adenosyl-L-methionine = N(1)-methylguanosine(37) in tRNA + S-adenosyl-L-homocysteine + H(+). Specifically methylates guanosine-37 in various tRNAs. The chain is tRNA (guanine-N(1)-)-methyltransferase from Trichodesmium erythraeum (strain IMS101).